Here is a 231-residue protein sequence, read N- to C-terminus: eRF1 methyltransferase catalytic subunit mtq2 (231 aa).

Residues 54–58, Asp80, and Asn130 contribute to the S-adenosyl-L-methionine site; that span reads GCGSG. 130-133 provides a ligand contact to substrate; it reads NPPY.

It belongs to the eukaryotic/archaeal PrmC-related family. As to quaternary structure, heterodimer of mtq2-trm112. mtq2 is the catalytic subunit carrying the catalytic and the S-adenosyl L-methionine binding sites.

The protein localises to the cytoplasm. It localises to the nucleus. It carries out the reaction L-glutaminyl-[peptide chain release factor] + S-adenosyl-L-methionine = N(5)-methyl-L-glutaminyl-[peptide chain release factor] + S-adenosyl-L-homocysteine + H(+). In terms of biological role, methylates eRF1 on 'Gln-182' using S-adenosyl L-methionine as methyl donor. eRF1 needs to be complexed to eRF3 in its GTP-bound form to be efficiently methylated. This is eRF1 methyltransferase catalytic subunit mtq2 (mtq2) from Schizosaccharomyces pombe (strain 972 / ATCC 24843) (Fission yeast).